The following is a 76-amino-acid chain: UPF0248 protein MmarC5_1387 (76 aa).

Belongs to the UPF0248 family.

The chain is UPF0248 protein MmarC5_1387 from Methanococcus maripaludis (strain C5 / ATCC BAA-1333).